We begin with the raw amino-acid sequence, 201 residues long: Small ribosomal subunit protein uS4c (201 aa).

The segment at 15–44 is disordered; it reads LGALPGLTNKRPRAGSDLRNQSRSGKKSQY. The S4 RNA-binding domain occupies 89-149; sequence MRLDNILFRL…DEQKSRALIQ (61 aa).

This sequence belongs to the universal ribosomal protein uS4 family. Part of the 30S ribosomal subunit. Contacts protein S5. The interaction surface between S4 and S5 is involved in control of translational fidelity.

It is found in the plastid. Its subcellular location is the chloroplast. Its function is as follows. One of the primary rRNA binding proteins, it binds directly to 16S rRNA where it nucleates assembly of the body of the 30S subunit. With S5 and S12 plays an important role in translational accuracy. The sequence is that of Small ribosomal subunit protein uS4c (rps4) from Helianthus annuus (Common sunflower).